We begin with the raw amino-acid sequence, 353 residues long: MNLNSTSQLLVRNEEGLVGKILFANPEDTYPLDLSRKADVYAWCQSKTYYDALLRVGFADEKLFLSEQWALEHGSDFDHIVIYQPKAKELLDYLLASVLPLLKEGGQIWLVGDNKSGVKSSMKRLEAGLDEVGKRDGAKHCLLYTGYKRRPTKPFVFEDWITTWKQEVAGQTLTLCSLPGVFGHGKLDKGTDILLNQLNQHRFMSDVASARILDFGCGDGIIALWLHNKTGARITALDDSVMALKATELTFAANQVSDAVTLIASNGLDEVKGRFNYVVTNPPFHSGVNTDYSIAESFFMMVKQHLTLNGELFVVANDFLRYPPILDAALGSHTRLYRDRGFAIYHGRQPKKK.

Belongs to the methyltransferase superfamily. RsmC family. In terms of assembly, monomer.

The protein localises to the cytoplasm. The enzyme catalyses guanosine(1207) in 16S rRNA + S-adenosyl-L-methionine = N(2)-methylguanosine(1207) in 16S rRNA + S-adenosyl-L-homocysteine + H(+). Functionally, specifically methylates the guanine in position 1207 of 16S rRNA in the 30S particle. The polypeptide is Ribosomal RNA small subunit methyltransferase C (Marinomonas sp. (strain MWYL1)).